Here is a 414-residue protein sequence, read N- to C-terminus: 2,3-diketo-5-methylthiopentyl-1-phosphate enolase (414 aa).

The active-site Proton acceptor is lysine 99. Substrate-binding positions include lysine 148, lysine 174–glutamate 177, histidine 265, glycine 338, and glycine 360–glycine 361. Mg(2+) contacts are provided by lysine 174, aspartate 176, and glutamate 177. An N6-carboxylysine modification is found at lysine 174.

The protein belongs to the RuBisCO large chain family. Type IV subfamily. As to quaternary structure, homodimer. It depends on Mg(2+) as a cofactor.

It catalyses the reaction 5-methylsulfanyl-2,3-dioxopentyl phosphate = 2-hydroxy-5-methylsulfanyl-3-oxopent-1-enyl phosphate. It functions in the pathway amino-acid biosynthesis; L-methionine biosynthesis via salvage pathway; L-methionine from S-methyl-5-thio-alpha-D-ribose 1-phosphate: step 3/6. In terms of biological role, catalyzes the enolization of 2,3-diketo-5-methylthiopentyl-1-phosphate (DK-MTP-1-P) into 2-hydroxy-3-keto-5-methylthiopentenyl-1-phosphate (HK-MTPenyl-1-P). The polypeptide is 2,3-diketo-5-methylthiopentyl-1-phosphate enolase (Bacillus cereus (strain AH187)).